Consider the following 197-residue polypeptide: Probable UbiX-like flavin prenyltransferase (197 aa).

Residues 9–11 (GAT), Ser36, 87–90 (SMKT), and Arg122 contribute to the FMN site.

The protein belongs to the UbiX/PAD1 family. YclB subfamily. As to quaternary structure, homododecamer.

The enzyme catalyses dimethylallyl phosphate + FMNH2 = prenylated FMNH2 + phosphate. In terms of biological role, flavin prenyltransferase that catalyzes the synthesis of the prenylated FMN cofactor (prenyl-FMN) for phenolic acid decarboxylase C. Involved in the decarboxylation and detoxification of phenolic derivatives under both aerobic and anaerobic conditions. The protein is Probable UbiX-like flavin prenyltransferase (ecdB) of Escherichia coli O111:H-.